Consider the following 647-residue polypeptide: UvrABC system protein C (647 aa).

One can recognise a GIY-YIG domain in the interval 16–95 (VEPGVYRFRD…IKEFDPRFNV (80 aa)). In terms of domain architecture, UVR spans 208–243 (DRYARELEQQMNAAAENLDFERAARLRDDRSALKRA).

The protein belongs to the UvrC family. Interacts with UvrB in an incision complex.

The protein resides in the cytoplasm. Functionally, the UvrABC repair system catalyzes the recognition and processing of DNA lesions. UvrC both incises the 5' and 3' sides of the lesion. The N-terminal half is responsible for the 3' incision and the C-terminal half is responsible for the 5' incision. This chain is UvrABC system protein C, found in Mycobacterium marinum (strain ATCC BAA-535 / M).